The chain runs to 470 residues: Angiopoietin-related protein 6 (470 aa).

Positions 1–20 are cleaved as a signal peptide; sequence MGKPWLRALQLLLLLGASWA. Residue N58 is glycosylated (N-linked (GlcNAc...) asparagine). Residues 59-116 adopt a coiled-coil conformation; it reads ASELAALRMRVGRHEELLRELQRLAAADGAVAGEVRALRKESRGLSARLGQLRAQLQH. A glycan (N-linked (GlcNAc...) (complex) asparagine) is linked at N145. The disordered stretch occupies residues 214 to 249; that stretch reads SDTSRMLDPAPEPQRDQTQRQQEPMASPMPAGHPAV. A Fibrinogen C-terminal domain is found at 251 to 469; that stretch reads TKPVGPWQDC…KAAMLIRPLK (219 aa). Disulfide bonds link C260/C287 and C410/C423.

Its subcellular location is the secreted. Its function is as follows. May play a role in the wound healing process. May promote epidermal proliferation, remodeling and regeneration. May promote the chemotactic activity of endothelial cells and induce neovascularization. May counteract high-fat diet-induced obesity and related insulin resistance through increased energy expenditure. The polypeptide is Angiopoietin-related protein 6 (ANGPTL6) (Homo sapiens (Human)).